The primary structure comprises 1168 residues: Myosin IC heavy chain (1168 aa).

Positions 7 to 666 (HGVDDMVMLT…SVFSLEELRD (660 aa)) constitute a Myosin motor domain. 101–108 (GESGAGKT) contacts ATP. Serine 311 is subject to Phosphoserine. Residues 542 to 564 (INILVATLSKCTPHYIRCIKPNE) form an actin-binding region. Residues 704–892 (KERRRLSLER…KVSVAPGLPP (189 aa)) enclose the TH1 domain. Disordered stretches follow at residues 876 to 909 (DGKVKGTKVSVAPGLPPSSAPNIQAPQETSGGAS), 921 to 978 (ILGA…APGP), and 1036 to 1168 (AAAP…PPGM). The span at 895 to 909 (APNIQAPQETSGGAS) shows a compositional bias: polar residues. Gly residues-rich tracts occupy residues 924–939 (AKGGGGGGGRGRGGPS) and 950–959 (PGGGGGGPSP). Low complexity predominate over residues 960–978 (FGGRPSPSGPPAAASAPGP). The 60-residue stretch at 976–1035 (PGPEQARALYDFAAENPDELTFNEGAVVTVINKSNPDWWEGELNGQRGVFPASYVELIPR) folds into the SH3 domain. The segment covering 1040–1052 (APGPSGGPRPAPP) has biased composition (pro residues). Gly residues-rich tracts occupy residues 1063-1083 (GGPGPMRGRGGPAPGGPGRGG) and 1090-1099 (GRAGPPGGRG). The segment covering 1100–1112 (MPAPGGAAPRGRG) has biased composition (low complexity). Residues 1120 to 1141 (GPPGGGRGGAPPPGGMRGRGGP) are compositionally biased toward gly residues. The segment covering 1152 to 1161 (GGMMPPRGRA) has biased composition (low complexity).

This sequence belongs to the TRAFAC class myosin-kinesin ATPase superfamily. Myosin family. As to quaternary structure, myosin I heavy chain is single-headed. Dimer of a heavy and a light chain. Inability to self-assemble into filaments.

Functionally, myosin is a protein that binds to F-actin and has ATPase activity that is activated by F-actin. The protein is Myosin IC heavy chain (MIC) of Acanthamoeba castellanii (Amoeba).